A 275-amino-acid chain; its full sequence is MANPTVIKLQDGNVMPQLGLGVWQASNEEVITAIQKALEVGYRSFDTAAAYKNEEGVGKALKNASVNREELFITTKLWNDDHNRPREALLDSLKKLQLDYIDLYLMHWPVPAIDHYVEAWKGMIELQKEGLIKSIGVCNFQIHHLQRLIDETGVTPVINQIELHPLMQQRQLHAWNATHKIQTESWSPLAQGGKGVFDQKVIRDLADKYGKTPAQIVIRWHLDSGLVVIPKSVTPSRIAENFDVWDFRLDKDELGEIAKLDQGKRLGPDPDQFGG.

Tyr51 serves as the catalytic Proton donor. Residue His107 participates in substrate binding. Residue 187 to 241 (SPLAQGGKGVFDQKVIRDLADKYGKTPAQIVIRWHLDSGLVVIPKSVTPSRIAEN) coordinates NADP(+).

Belongs to the aldo/keto reductase family. In terms of assembly, monomer.

The protein localises to the cytoplasm. It catalyses the reaction hydroxyacetone + NADP(+) = methylglyoxal + NADPH + H(+). In terms of biological role, aldo-keto reductase that significantly contributes to cellular methylglyoxal detoxification by catalyzing the NADPH-dependent conversion of methylglyoxal to acetol. The chain is Methylglyoxal reductase DkgA from Escherichia coli O157:H7.